Reading from the N-terminus, the 27-residue chain is Small integral membrane protein 43 (27 aa).

Residues 15 to 21 form an important for interaction with SLC2A1 and SLC2A3 region; that stretch reads HREPWGF.

Interacts with glucose transporters SLC2A1/GLUT1 and SLC2A3/GLUT3; the interactions may promote SLC2A1- and SLC2A3-mediated glucose transport to meet the energy needs of mesendoderm differentiation.

The protein localises to the cell membrane. Its function is as follows. Required for mesendoderm differentiation. Interacts with glucose transporters and promotes glucose uptake. Probably augments the glucose uptake capacity of glucose transporter proteins to meet the energy needs of mesendoderm differentiation. This chain is Small integral membrane protein 43, found in Pongo abelii (Sumatran orangutan).